A 40-amino-acid polypeptide reads, in one-letter code: Metallothionein-1 (40 aa).

It belongs to the metallothionein superfamily. Type 5 family.

This protein binds cations of several transition elements. It is thought to be involved in detoxification processes. This chain is Metallothionein-1 (MtnA), found in Drosophila melanogaster (Fruit fly).